We begin with the raw amino-acid sequence, 115 residues long: Large ribosomal subunit protein bL20 (115 aa).

Belongs to the bacterial ribosomal protein bL20 family.

Binds directly to 23S ribosomal RNA and is necessary for the in vitro assembly process of the 50S ribosomal subunit. It is not involved in the protein synthesizing functions of that subunit. This chain is Large ribosomal subunit protein bL20, found in Synechococcus sp. (strain CC9605).